The primary structure comprises 479 residues: Anaerobic nitric oxide reductase flavorubredoxin (479 aa).

Positions 30 to 210 are zinc metallo-hydrolase; that stretch reads LRGSSYNSYL…PFSRLVTPKI (181 aa). Fe cation contacts are provided by His-79, Glu-81, Asp-83, His-147, Asp-166, and His-227. Positions 254–393 constitute a Flavodoxin-like domain; sequence ITIVYDTMSN…LCREHGREIA (140 aa). FMN contacts are provided by residues 260–264 and 342–369; these read TMSNN and AFGS…EMSL. Residues 423-474 enclose the Rubredoxin-like domain; it reads GPRMQCSVCQWIYDPAKGEPMQDVAPGTPWSEVPDNFLCPECSLGKDVFDEL. Fe cation contacts are provided by Cys-428, Cys-431, Cys-461, and Cys-464.

This sequence in the N-terminal section; belongs to the zinc metallo-hydrolase group 3 family. As to quaternary structure, homotetramer. Fe cation serves as cofactor. It depends on FMN as a cofactor.

The protein localises to the cytoplasm. It functions in the pathway nitrogen metabolism; nitric oxide reduction. In terms of biological role, anaerobic nitric oxide reductase; uses NADH to detoxify nitric oxide (NO), protecting several 4Fe-4S NO-sensitive enzymes. Has at least 2 reductase partners, only one of which (NorW, flavorubredoxin reductase) has been identified. NO probably binds to the di-iron center; electrons enter from the NorW at rubredoxin and are transferred sequentially to the FMN center and the di-iron center. Also able to function as an aerobic oxygen reductase. This chain is Anaerobic nitric oxide reductase flavorubredoxin, found in Escherichia coli (strain UTI89 / UPEC).